A 230-amino-acid chain; its full sequence is Cytochrome c oxidase subunit 2 (230 aa).

The Mitochondrial intermembrane portion of the chain corresponds to 1–29 (NNFFQGYNLLFQHSLFASYMDWFHAFNCS). Residues 30-50 (LLLGVLVFVTLLFGYLIFSTF) traverse the membrane as a helical segment. Residues 51 to 63 (YFKSKKIEYQFGE) are Mitochondrial matrix-facing. A helical membrane pass occupies residues 64–84 (LLCSIFPTIILLMQMVPSLSL). Residues 85–230 (LYYYGLMNLD…FKSWCFGTME (146 aa)) are Mitochondrial intermembrane-facing. Positions 163, 198, 200, 202, 206, and 209 each coordinate Cu cation. Glu-200 contributes to the Mg(2+) binding site.

This sequence belongs to the cytochrome c oxidase subunit 2 family. Component of the cytochrome c oxidase (complex IV, CIV), a multisubunit enzyme composed of a catalytic core of 3 subunits and several supernumerary subunits. The complex exists as a monomer or a dimer and forms supercomplexes (SCs) in the inner mitochondrial membrane with ubiquinol-cytochrome c oxidoreductase (cytochrome b-c1 complex, complex III, CIII). The cofactor is Cu cation.

The protein localises to the mitochondrion inner membrane. It catalyses the reaction 4 Fe(II)-[cytochrome c] + O2 + 8 H(+)(in) = 4 Fe(III)-[cytochrome c] + 2 H2O + 4 H(+)(out). Functionally, component of the cytochrome c oxidase, the last enzyme in the mitochondrial electron transport chain which drives oxidative phosphorylation. The respiratory chain contains 3 multisubunit complexes succinate dehydrogenase (complex II, CII), ubiquinol-cytochrome c oxidoreductase (cytochrome b-c1 complex, complex III, CIII) and cytochrome c oxidase (complex IV, CIV), that cooperate to transfer electrons derived from NADH and succinate to molecular oxygen, creating an electrochemical gradient over the inner membrane that drives transmembrane transport and the ATP synthase. Cytochrome c oxidase is the component of the respiratory chain that catalyzes the reduction of oxygen to water. Electrons originating from reduced cytochrome c in the intermembrane space (IMS) are transferred via the dinuclear copper A center (CU(A)) of subunit 2 and heme A of subunit 1 to the active site in subunit 1, a binuclear center (BNC) formed by heme A3 and copper B (CU(B)). The BNC reduces molecular oxygen to 2 water molecules using 4 electrons from cytochrome c in the IMS and 4 protons from the mitochondrial matrix. The protein is Cytochrome c oxidase subunit 2 (cox-2) of Caenorhabditis remanei (Caenorhabditis vulgaris).